Consider the following 636-residue polypeptide: Receptor-like kinase LIP1 (636 aa).

Residues asparagine 18–proline 57 are disordered. In terms of domain architecture, Protein kinase spans phenylalanine 74–leucine 352. ATP contacts are provided by residues leucine 80–valine 88 and lysine 103. The active-site Proton acceptor is aspartate 201. Serine 205 and serine 236 each carry phosphoserine. At threonine 242 the chain carries Phosphothreonine. Tyrosine 250 carries the post-translational modification Phosphotyrosine. Residues phenylalanine 389 to aspartate 636 are disordered. Residues serine 403–threonine 434 are a coiled coil. The segment covering lysine 413–glutamine 431 has biased composition (basic and acidic residues). Residues glutamate 432–serine 455 show a composition bias toward acidic residues. Residues threonine 480–isoleucine 489 are compositionally biased toward polar residues. Composition is skewed to basic and acidic residues over residues aspartate 522–serine 531 and histidine 554–proline 566. Over residues arginine 567–leucine 576 the composition is skewed to polar residues. 2 stretches are compositionally biased toward basic and acidic residues: residues asparagine 588 to aspartate 603 and serine 619 to aspartate 636.

It belongs to the protein kinase superfamily. Ser/Thr protein kinase family. As to quaternary structure, interacts with PRK6. Post-translationally, palmitoylated. As to expression, expressed in mature pollen and in germinating pollen tubes.

The protein resides in the cell membrane. It is found in the cytoplasm. Involved in pollen tube guidance into micropyle. Participates in perception of the ovule-secreted peptide signal LURE1. This is Receptor-like kinase LIP1 from Arabidopsis thaliana (Mouse-ear cress).